The following is a 188-amino-acid chain: MAIMSDKWIKEAVINQSMIRPFAEKQVRVHNKEKIISYGLSSYGYDARVSNEFKIFTNINSTTVDPKNFSEYNLVDREVDVCIIPPNSFALGRTIEYFKIPRDVLVICVGKSTYARCGIIVNVTPLEPEWEGHVTLEFSNTTPLPAKIYANEGACQFLFLKSDQICDTSYADRQGKYMKQVGVTLPLT.

DCTP contacts are provided by residues 111–116 (KSTYAR), 135–137 (TLE), glutamine 156, tyrosine 170, lysine 179, and glutamine 180. Glutamate 137 functions as the Proton donor/acceptor in the catalytic mechanism.

This sequence belongs to the dCTP deaminase family. Homotrimer.

It catalyses the reaction dCTP + H2O + H(+) = dUTP + NH4(+). It participates in pyrimidine metabolism; dUMP biosynthesis; dUMP from dCTP (dUTP route): step 1/2. Its function is as follows. Catalyzes the deamination of dCTP to dUTP. In Rickettsia felis (strain ATCC VR-1525 / URRWXCal2) (Rickettsia azadi), this protein is dCTP deaminase.